A 283-amino-acid chain; its full sequence is Bifunctional protein FolD (283 aa).

Residues Gly165–Ser167, Ser190, and Val231 contribute to the NADP(+) site.

The protein belongs to the tetrahydrofolate dehydrogenase/cyclohydrolase family. As to quaternary structure, homodimer.

The enzyme catalyses (6R)-5,10-methylene-5,6,7,8-tetrahydrofolate + NADP(+) = (6R)-5,10-methenyltetrahydrofolate + NADPH. The catalysed reaction is (6R)-5,10-methenyltetrahydrofolate + H2O = (6R)-10-formyltetrahydrofolate + H(+). It participates in one-carbon metabolism; tetrahydrofolate interconversion. In terms of biological role, catalyzes the oxidation of 5,10-methylenetetrahydrofolate to 5,10-methenyltetrahydrofolate and then the hydrolysis of 5,10-methenyltetrahydrofolate to 10-formyltetrahydrofolate. This Bacillus velezensis (strain DSM 23117 / BGSC 10A6 / LMG 26770 / FZB42) (Bacillus amyloliquefaciens subsp. plantarum) protein is Bifunctional protein FolD.